A 490-amino-acid polypeptide reads, in one-letter code: MSGFRLIDIVKPILPILPEVELPFEKLPFDDKIVYTIFAGLIYLFAQFPLVGLPKATTPNVNDPIYFLRGVFGCEPRTLLEFGLFPNISSGLILQLLAGLKVIKVNFKIQSDRELFQSLTKVFAIVQYVILTNIFIFAGYFGDDLSVVQIGLINFQLVGAGIFTTLLAEVIDKGFGFSSGAMIINTVVIATNLVADTFGVSQIKVGEDDQTEAQGALINLIQGLRSKHKTFIGGIISAFNRDYLPNLTTTIIVLAIAIIVCYLQSVRVELPIRSTRARGTNNVYPIKLLYTGCLSVLFSYTILFYIHIFAFVLIQLVAKNEPTHIICKIMGHYENANNLLAVPTFPLSLLAPPTSFFKGVTQQPLTFITYSAFILVTGIWFADKWQAISGSSARDVALEFKDQGITLMGRREQNVAKELNKVIPIAAVTGASVLSLITVIGESLGLKGKAAGIVVGIAGGFSLLEVITIEYQQSGGQSALNQVLGVPGAM.

The Cytoplasmic segment spans residues 1 to 32 (MSGFRLIDIVKPILPILPEVELPFEKLPFDDK). The helical transmembrane segment at 33–53 (IVYTIFAGLIYLFAQFPLVGL) threads the bilayer. The Lumenal segment spans residues 54–121 (PKATTPNVND…DRELFQSLTK (68 aa)). Residues 122–142 (VFAIVQYVILTNIFIFAGYFG) traverse the membrane as a helical segment. Topologically, residues 143-146 (DDLS) are cytoplasmic. A helical transmembrane segment spans residues 147-167 (VVQIGLINFQLVGAGIFTTLL). Residues 168–174 (AEVIDKG) lie on the Lumenal side of the membrane. Residues 175-195 (FGFSSGAMIINTVVIATNLVA) traverse the membrane as a helical segment. At 196 to 242 (DTFGVSQIKVGEDDQTEAQGALINLIQGLRSKHKTFIGGIISAFNRD) the chain is on the cytoplasmic side. A helical membrane pass occupies residues 243–263 (YLPNLTTTIIVLAIAIIVCYL). The Lumenal segment spans residues 264–293 (QSVRVELPIRSTRARGTNNVYPIKLLYTGC). The chain crosses the membrane as a helical span at residues 294 to 314 (LSVLFSYTILFYIHIFAFVLI). Residues 315 to 339 (QLVAKNEPTHIICKIMGHYENANNL) lie on the Cytoplasmic side of the membrane. A helical transmembrane segment spans residues 340 to 360 (LAVPTFPLSLLAPPTSFFKGV). Residue T361 is a topological domain, lumenal. The chain crosses the membrane as a helical span at residues 362 to 382 (QQPLTFITYSAFILVTGIWFA). Topologically, residues 383–421 (DKWQAISGSSARDVALEFKDQGITLMGRREQNVAKELNK) are cytoplasmic. The chain crosses the membrane as a helical span at residues 422 to 442 (VIPIAAVTGASVLSLITVIGE). Residues 443-449 (SLGLKGK) lie on the Lumenal side of the membrane. A helical transmembrane segment spans residues 450-470 (AAGIVVGIAGGFSLLEVITIE). Residues 471 to 490 (YQQSGGQSALNQVLGVPGAM) lie on the Cytoplasmic side of the membrane.

It belongs to the SecY/SEC61-alpha family. Component of the heterotrimeric Ssh1 complex, which is composed of SSH1, SBH2 and SSS1.

It localises to the endoplasmic reticulum membrane. In terms of biological role, part of the Ssh1 complex, which probably is the major component of a channel-forming translocon complex that may function exclusively in the cotranslational pathway of protein endoplasmic reticulum (ER) import. This is Sec sixty-one protein homolog (SSH1) from Saccharomyces cerevisiae (strain ATCC 204508 / S288c) (Baker's yeast).